Reading from the N-terminus, the 201-residue chain is Large ribosomal subunit protein uL4 (201 aa).

The disordered stretch occupies residues 43 to 73 (SRGQKTRAEVTGSGKKPWRQKGTGRARSGSV).

The protein belongs to the universal ribosomal protein uL4 family. In terms of assembly, part of the 50S ribosomal subunit.

Its function is as follows. One of the primary rRNA binding proteins, this protein initially binds near the 5'-end of the 23S rRNA. It is important during the early stages of 50S assembly. It makes multiple contacts with different domains of the 23S rRNA in the assembled 50S subunit and ribosome. Functionally, forms part of the polypeptide exit tunnel. The polypeptide is Large ribosomal subunit protein uL4 (Sodalis glossinidius (strain morsitans)).